A 288-amino-acid chain; its full sequence is General transcription factor IIE subunit 2 (288 aa).

Residues 16–56 form a disordered region; it reads ALTTPAVEKRPSASSESSKKKRAKLELSSTSGSKPSSDGSN. Over residues 41 to 56 the composition is skewed to low complexity; that stretch reads ELSSTSGSKPSSDGSN. Residues 63–143 constitute a DNA-binding region (TFIIE beta); sequence SLSGSSGYKF…YAFKPKYNLK (81 aa).

The protein belongs to the TFIIE beta subunit family. Tetramer of two alpha and two beta chains.

The protein resides in the nucleus. Functionally, recruits TFIIH to the initiation complex and stimulates the RNA polymerase II C-terminal domain kinase and DNA-dependent ATPase activities of TFIIH. Both TFIIH and TFIIE are required for promoter clearance by RNA polymerase. This is General transcription factor IIE subunit 2 (gtf2e2) from Xenopus laevis (African clawed frog).